Reading from the N-terminus, the 182-residue chain is dTTP/UTP pyrophosphatase (182 aa).

Catalysis depends on aspartate 64, which acts as the Proton acceptor.

The protein belongs to the Maf family. YhdE subfamily. The cofactor is a divalent metal cation.

Its subcellular location is the cytoplasm. It carries out the reaction dTTP + H2O = dTMP + diphosphate + H(+). The catalysed reaction is UTP + H2O = UMP + diphosphate + H(+). Its function is as follows. Nucleoside triphosphate pyrophosphatase that hydrolyzes dTTP and UTP. May have a dual role in cell division arrest and in preventing the incorporation of modified nucleotides into cellular nucleic acids. The polypeptide is dTTP/UTP pyrophosphatase (Thermosipho melanesiensis (strain DSM 12029 / CIP 104789 / BI429)).